A 156-amino-acid chain; its full sequence is MASRVLSAYVSRLPAAFAPLPRVRMLAVARPLSTALCSAGTQTRLGPLQPALVLAQVPGRVTQLCRQYSDMPPLTLEGIQDRVLYVLKLYDKIDPEKLSVNSHFMKDLGLDSLDQVEIIMAMEDEFGFEIPDIDAEKLMCPQEIVDYIADKKDVYE.

The N-terminal 68 residues, 1–68 (MASRVLSAYV…GRVTQLCRQY (68 aa)), are a transit peptide targeting the mitochondrion. In terms of domain architecture, Carrier spans 77–152 (EGIQDRVLYV…EIVDYIADKK (76 aa)). An N6-acetyllysine modification is found at Lys-88. The residue at position 112 (Ser-112) is an O-(pantetheine 4'-phosphoryl)serine.

The protein belongs to the acyl carrier protein (ACP) family. Mammalian complex I is composed of 45 different subunits. Interacts with ETFRF1. Identified in a complex composed of MALSU1, MIEF1 upstream open reading frame protein and NDUFAB1; within the trimeric complex, MIEF1 upstream open reading frame protein functions as a bridging scaffold that interacts with MALSU1 on one side, and with NDUFAB1 on the other side. The complex interacts with the mitochondrial large ribosomal subunit. Interacts with alpha-1-microglobulin chain; this interaction is required for the maintenance of mitochondrial redox homeostasis. Component of the mitochondrial core iron-sulfur cluster (ISC) complex composed of NFS1, LYRM4, NDUFAB1, ISCU, FXN, and FDX2; this complex is a heterohexamer containing two copies of each monomer. Component of the cyteine desulfurase complex composed of NFS1, LYRM4 and NDUFAB1; this complex contributes to the stability and cysteine desulfurase activity of NFS1. Phosphopantetheinylation at Ser-112 is essential for interactions with LYR motif-containing proteins.

It is found in the mitochondrion. Its function is as follows. Carrier of the growing fatty acid chain in fatty acid biosynthesis. Accessory and non-catalytic subunit of the mitochondrial membrane respiratory chain NADH dehydrogenase (Complex I), which functions in the transfer of electrons from NADH to the respiratory chain. Accessory protein, of the core iron-sulfur cluster (ISC) assembly complex, that regulates, in association with LYRM4, the stability and the cysteine desulfurase activity of NFS1 and participates in the [2Fe-2S] clusters assembly on the scaffolding protein ISCU. The core iron-sulfur cluster (ISC) assembly complex is involved in the de novo synthesis of a [2Fe-2S] cluster, the first step of the mitochondrial iron-sulfur protein biogenesis. This process is initiated by the cysteine desulfurase complex (NFS1:LYRM4:NDUFAB1) that produces persulfide which is delivered on the scaffold protein ISCU in a FXN-dependent manner. Then this complex is stabilized by FDX2 which provides reducing equivalents to accomplish the [2Fe-2S] cluster assembly. Finally, the [2Fe-2S] cluster is transferred from ISCU to chaperone proteins, including HSCB, HSPA9 and GLRX5. The polypeptide is Acyl carrier protein, mitochondrial (Pongo pygmaeus (Bornean orangutan)).